The following is a 686-amino-acid chain: MCCYLFQQRERERKGTLLTGEAYKLCETITLLDVLQIEQDIPPIGNSDDNSDDVAKSRKVRNSCMCPPGPPGERGPVGPPGLPGLPAPYYRRPRVPLSNVVFVVVIVIVFFKFQNLDESISRKMRAFGMLYSPDGQAIQLRGMPGPPGPAGPKGLRGYPGFPGPIGLDGPRGLPGTPGSKGERGERGPVGPPGFPGPKGDRGVMTGPFGVHGQHPAPSGPIGHHTTMNIGPPGPPGPPGPPGPAGRDGRHGMKGDRGLPGFDGESKIGPKGETGNPGRDGIPGARGPPGERGEKGDTAFLSTYPRGQSVSTVSSSGSQGPPGPPGPPGVCQVSQCIGVQGPPGIPGEPGRTIIGPQGPPGEKGERGERGETGDKGPPGTPGAASLLNGGKALVGPPGPPGRDGRPGEKGEKGEHGLRGDMGLPGPEGTPGKRGRRGRHGISLVAPNGTINEDLKKLLKTELMPLLIEDISELRGKNVIPGPPGPPGPRGHHGPIGPAGERGPQGLPGHSGERGERGDIGPPGLPGQPGAAESSGNQSGPRGPPGLPGPPGEKGDLGPPGLPGQPGALGLPGHPGPMGLRGPHGTEGKQGKQGPEGPKGYPGPMGPQGPPGNDGEPGIDGRPGPAGEKGDQGIPGLDAPCPTGPDGLPLPYCSWKPMDGKNDVWERRKRATLPRSESVPEERTYIKN.

Disordered stretches follow at residues 42–79 (PPIG…PVGP) and 163–444 (GPIG…SLVA). Residues 67–79 (PPGPPGERGPVGP) are compositionally biased toward pro residues. Triple-helical region regions lie at residues 142 to 201 (GMPG…KGDR), 230 to 263 (GPPG…GFDG), and 268 to 296 (GPKG…EKGD). Residues 231–243 (PPGPPGPPGPPGP) show a composition bias toward pro residues. Residues 246–256 (RDGRHGMKGDR) are compositionally biased toward basic and acidic residues. The span at 306-318 (GQSVSTVSSSGSQ) shows a compositional bias: low complexity. 2 stretches are compositionally biased toward basic and acidic residues: residues 361–373 (EKGE…ETGD) and 401–417 (RDGR…HGLR). The triple-helical region stretch occupies residues 394 to 439 (GPPGPPGRDGRPGEKGEKGEHGLRGDMGLPGPEGTPGKRGRRGRHG). N-linked (GlcNAc...) asparagine glycosylation is found at Asn446 and Asn535. A disordered region spans residues 475-650 (KNVIPGPPGP…TGPDGLPLPY (176 aa)). Triple-helical region regions lie at residues 479–536 (PGPP…SGNQ), 538–576 (GPRG…PGPM), and 577–636 (GLRG…PGLD). Positions 540–549 (RGPPGLPGPP) are enriched in pro residues. The segment covering 563–581 (QPGALGLPGHPGPMGLRGP) has biased composition (low complexity).

The protein belongs to the cuticular collagen family. As to quaternary structure, collagen polypeptide chains are complexed within the cuticle by disulfide bonds and other types of covalent cross-links.

Functionally, nematode cuticles are composed largely of collagen-like proteins. The cuticle functions both as an exoskeleton and as a barrier to protect the worm from its environment. The protein is Putative cuticle collagen 99 of Caenorhabditis briggsae.